Here is a 288-residue protein sequence, read N- to C-terminus: Cyclin-dependent kinase 2 homolog (288 aa).

Residues 4–284 (YHGLEKIGEG…AKQAIEHPYF (281 aa)) form the Protein kinase domain. Residues 10–18 (IGEGTYGVV) and lysine 32 contribute to the ATP site. Phosphothreonine is present on threonine 14. Phosphotyrosine is present on tyrosine 15. Aspartate 125 (proton acceptor) is an active-site residue. Threonine 158 is subject to Phosphothreonine.

It belongs to the protein kinase superfamily. CMGC Ser/Thr protein kinase family. CDC2/CDKX subfamily. In terms of assembly, may form a complex composed of at least the catalytic subunit CRK2 and a cyclin. Mg(2+) is required as a cofactor.

The protein localises to the cytoplasm. The catalysed reaction is L-seryl-[protein] + ATP = O-phospho-L-seryl-[protein] + ADP + H(+). It catalyses the reaction L-threonyl-[protein] + ATP = O-phospho-L-threonyl-[protein] + ADP + H(+). The enzyme catalyses [DNA-directed RNA polymerase] + ATP = phospho-[DNA-directed RNA polymerase] + ADP + H(+). Phosphorylation at Thr-14 or Tyr-15 inactivates the enzyme, while phosphorylation at Thr-158 activates it. Functionally, serine/threonine-protein kinase. Involved in the control of the cell cycle. Required for entry into S-phase and mitosis. Probable component of the kinase complex that phosphorylates the repetitive C-terminus of RNA polymerase II. The polypeptide is Cyclin-dependent kinase 2 homolog (Plasmodium chabaudi chabaudi).